The sequence spans 518 residues: Lysine 5,6-aminomutase alpha subunit (518 aa).

Residues 184–189 (RTTGQS), Ser238, Tyr263, Arg268, and Asn299 contribute to the pyridoxal 5'-phosphate site.

It belongs to the KamD family. As to quaternary structure, heterotetramer of 2 alpha and 2 beta subunits. Adenosylcob(III)alamin serves as cofactor. Requires pyridoxal 5'-phosphate as cofactor.

It catalyses the reaction (3S)-3,6-diaminohexanoate = (3S,5S)-3,5-diaminohexanoate. The catalysed reaction is D-lysine = (2R,5S)-2,5-diaminohexanoate. It participates in amino-acid degradation; L-lysine degradation via acetate pathway. Its function is as follows. Catalyzes the migration of the L-beta-lysine and D-lysine epsilon amino group to the delta carbon to produce 3,5-diaminohexanoate and 2,5-diaminohexanoate, respectively. The protein is Lysine 5,6-aminomutase alpha subunit of Fusobacterium nucleatum subsp. nucleatum (strain ATCC 25586 / DSM 15643 / BCRC 10681 / CIP 101130 / JCM 8532 / KCTC 2640 / LMG 13131 / VPI 4355).